The primary structure comprises 379 residues: MASRNIWCVRRNFLFDLRDWMLQYSAEVFLKSISFRPFSAECDSKDKESLEEEREDLLSNLVTMGVDIDMARRRQPGVFNKAVTNEQELKLFLLSKGASDKVIGSIISRYPRAITRTPESLSKRWDLWRKIMASDLEIVNILERSPESFFRSNNNLNLENNIKFLCSVGLTHKCLCRLLTNAPRTFSNSLNLNKQMVEFLQETGMSLGHNDPRDFVRKIISKNPSILIQSTKRVKTNIEFLQSTFNLNKRDLLLLICGPGARILDLSNDCTKKNYTNIRERLLSLGCSEEEVQRFVLSYLNMVFLSEKKFNDKIDCLIEEKISASQIIENPRILDSSINTLKTRIRELSHAGYDLSTSSIALLSWSQRRYEAKLKRLCG.

Residues 1-37 constitute a mitochondrion transit peptide; that stretch reads MASRNIWCVRRNFLFDLRDWMLQYSAEVFLKSISFRP. Interaction with DNA regions lie at residues 151 to 152, 229 to 233, 306 to 313, 337 to 340, and 366 to 373; these read RS, QSTKR, SEKKFNDK, SINT, and SQRRYEAK.

The protein belongs to the mTERF family. In terms of assembly, monomer. Post-translationally, phosphoprotein with mostly four phosphate groups. While the DNA-binding activity is unaffected by the phosphorylation state, only the phosphorylated form of the protein is active for termination activity. Functioning seems to be regulated by phosphorylation. As to expression, predominantly expressed in heart and liver, with extremely low levels in other tissues. Expressed strongly in the heart and at lower levels in brain, liver and kidney.

It localises to the mitochondrion. Functionally, transcription termination factor. Binds to a 28 bp region within the tRNA(Leu(uur)) gene at a position immediately adjacent to and downstream of the 16S rRNA gene; this region comprises a tridecamer sequence critical for directing accurate termination. Binds DNA along the major grove and promotes DNA bending and partial unwinding. Promotes base flipping. Transcription termination activity appears to be polarized with highest specificity for transcripts initiated on the light strand. This Mus musculus (Mouse) protein is Transcription termination factor 1a, mitochondrial (Mterf1a).